Reading from the N-terminus, the 255-residue chain is Fumarate reductase cytochrome b subunit (255 aa).

Transmembrane regions (helical) follow at residues 33–53 (TGLI…SILI), 78–98 (IVSV…FLAL), 126–146 (WFIQ…HLFV), 168–188 (FWLL…IGLY), and 208–228 (IKWA…GAYI). H44, H93, H143, and H182 together coordinate heme b.

The protein belongs to the diheme cytochrome b FrdC family. As to quaternary structure, part of an enzyme complex containing three subunits: a flavoprotein (frdA), an iron-sulfur protein (frdB), and diheme cytochrome b (frdC). Heme b is required as a cofactor.

It is found in the cell inner membrane. Functionally, the fumarate reductase enzyme complex is required for fumarate respiration. This subunit anchors the complex in the membrane and binds a diheme cytochrome b. The protein is Fumarate reductase cytochrome b subunit (frdC) of Helicobacter pylori (strain J99 / ATCC 700824) (Campylobacter pylori J99).